Here is a 276-residue protein sequence, read N- to C-terminus: Dermonecrotic toxin LlSicTox-alphaIV2ii (276 aa).

Residue histidine 5 is part of the active site. 2 residues coordinate Mg(2+): glutamate 25 and aspartate 27. Residue histidine 41 is the Nucleophile of the active site. Intrachain disulfides connect cysteine 45-cysteine 51 and cysteine 47-cysteine 193. Aspartate 85 is a binding site for Mg(2+).

This sequence belongs to the arthropod phospholipase D family. Class II subfamily. Mg(2+) is required as a cofactor. In terms of tissue distribution, expressed by the venom gland.

It is found in the secreted. The enzyme catalyses an N-(acyl)-sphingosylphosphocholine = an N-(acyl)-sphingosyl-1,3-cyclic phosphate + choline. The catalysed reaction is an N-(acyl)-sphingosylphosphoethanolamine = an N-(acyl)-sphingosyl-1,3-cyclic phosphate + ethanolamine. It catalyses the reaction a 1-acyl-sn-glycero-3-phosphocholine = a 1-acyl-sn-glycero-2,3-cyclic phosphate + choline. It carries out the reaction a 1-acyl-sn-glycero-3-phosphoethanolamine = a 1-acyl-sn-glycero-2,3-cyclic phosphate + ethanolamine. Functionally, dermonecrotic toxins cleave the phosphodiester linkage between the phosphate and headgroup of certain phospholipids (sphingolipid and lysolipid substrates), forming an alcohol (often choline) and a cyclic phosphate. This toxin acts on sphingomyelin (SM). It may also act on ceramide phosphoethanolamine (CPE), lysophosphatidylcholine (LPC) and lysophosphatidylethanolamine (LPE), but not on lysophosphatidylserine (LPS), and lysophosphatidylglycerol (LPG). It acts by transphosphatidylation, releasing exclusively cyclic phosphate products as second products. Induces dermonecrosis, hemolysis, increased vascular permeability, edema, inflammatory response, and platelet aggregation. In Loxosceles laeta (South American recluse spider), this protein is Dermonecrotic toxin LlSicTox-alphaIV2ii.